The primary structure comprises 474 residues: 3-isopropylmalate dehydratase large subunit (474 aa).

Residues C352, C413, and C416 each contribute to the [4Fe-4S] cluster site.

Belongs to the aconitase/IPM isomerase family. LeuC type 1 subfamily. As to quaternary structure, heterodimer of LeuC and LeuD. [4Fe-4S] cluster is required as a cofactor.

It carries out the reaction (2R,3S)-3-isopropylmalate = (2S)-2-isopropylmalate. It functions in the pathway amino-acid biosynthesis; L-leucine biosynthesis; L-leucine from 3-methyl-2-oxobutanoate: step 2/4. Catalyzes the isomerization between 2-isopropylmalate and 3-isopropylmalate, via the formation of 2-isopropylmaleate. The chain is 3-isopropylmalate dehydratase large subunit from Pseudomonas savastanoi pv. phaseolicola (strain 1448A / Race 6) (Pseudomonas syringae pv. phaseolicola (strain 1448A / Race 6)).